Reading from the N-terminus, the 174-residue chain is U-stichotoxin-Hau2a (174 aa).

The signal sequence occupies residues 1-18 (MKPIFIVALLFSTCLVNA). Positions 19–33 (KPSINDADIKREPEP) are excised as a propeptide. Position 39 is a hydroxyproline (proline 39). Cystine bridges form between cysteine 40–cysteine 51 and cysteine 43–cysteine 58. Positions 61-67 (RKREPEP) are excised as a propeptide. A Hydroxyproline modification is found at proline 73. Cystine bridges form between cysteine 74–cysteine 85 and cysteine 77–cysteine 92. The propeptide occupies 95–101 (RKREPEP). Proline 107 bears the Hydroxyproline mark. Cystine bridges form between cysteine 108-cysteine 119 and cysteine 111-cysteine 126. Positions 129-135 (RKREPEP) are excised as a propeptide. A Hydroxyproline modification is found at proline 141. Intrachain disulfides connect cysteine 142-cysteine 153 and cysteine 145-cysteine 160. A propeptide spanning residues 163–174 (RKREPENQDLWS) is cleaved from the precursor.

It belongs to the sea anemone BBH family.

The protein resides in the secreted. It is found in the nematocyst. Functionally, neurotoxin that paralyzes freshwater crabs at high concentration. This is U-stichotoxin-Hau2a from Heteractis aurora (Banded sea anemone).